We begin with the raw amino-acid sequence, 212 residues long: Leucyl/phenylalanyl-tRNA--protein transferase (212 aa).

This sequence belongs to the L/F-transferase family.

It is found in the cytoplasm. It carries out the reaction N-terminal L-lysyl-[protein] + L-leucyl-tRNA(Leu) = N-terminal L-leucyl-L-lysyl-[protein] + tRNA(Leu) + H(+). It catalyses the reaction N-terminal L-arginyl-[protein] + L-leucyl-tRNA(Leu) = N-terminal L-leucyl-L-arginyl-[protein] + tRNA(Leu) + H(+). The catalysed reaction is L-phenylalanyl-tRNA(Phe) + an N-terminal L-alpha-aminoacyl-[protein] = an N-terminal L-phenylalanyl-L-alpha-aminoacyl-[protein] + tRNA(Phe). In terms of biological role, functions in the N-end rule pathway of protein degradation where it conjugates Leu, Phe and, less efficiently, Met from aminoacyl-tRNAs to the N-termini of proteins containing an N-terminal arginine or lysine. The protein is Leucyl/phenylalanyl-tRNA--protein transferase of Allorhizobium ampelinum (strain ATCC BAA-846 / DSM 112012 / S4) (Agrobacterium vitis (strain S4)).